A 387-amino-acid chain; its full sequence is uncharacterized protein (387 aa).

The protein localises to the virion. This is an uncharacterized protein from Acanthamoeba polyphaga (Amoeba).